The sequence spans 216 residues: Large ribosomal subunit protein uL3 (216 aa).

This sequence belongs to the universal ribosomal protein uL3 family. As to quaternary structure, part of the 50S ribosomal subunit. Forms a cluster with proteins L14 and L19.

Functionally, one of the primary rRNA binding proteins, it binds directly near the 3'-end of the 23S rRNA, where it nucleates assembly of the 50S subunit. The sequence is that of Large ribosomal subunit protein uL3 from Symbiobacterium thermophilum (strain DSM 24528 / JCM 14929 / IAM 14863 / T).